The chain runs to 718 residues: Catalase (718 aa).

Catalysis depends on residues H103 and N176. Y390 provides a ligand contact to heme.

The protein belongs to the catalase family. The cofactor is heme.

It localises to the peroxisome matrix. The catalysed reaction is 2 H2O2 = O2 + 2 H2O. Functionally, catalyzes the degradation of hydrogen peroxide (H(2)O(2)) generated by peroxisomal oxidases to water and oxygen, thereby protecting cells from the toxic effects of hydrogen peroxide. This chain is Catalase (CAT1), found in Blumeria hordei (Barley powdery mildew).